The chain runs to 349 residues: Isopentenyl-diphosphate delta-isomerase (349 aa).

9–10 (RK) contributes to the substrate binding site. Residues 65–67 (AMT), Ser-95, and Asn-124 each bind FMN. 95–97 (STH) provides a ligand contact to substrate. A substrate-binding site is contributed by Gln-154. A Mg(2+)-binding site is contributed by Glu-155. FMN is bound by residues Lys-186, Ser-211, Thr-216, 262–264 (GLR), and 283–284 (SR).

This sequence belongs to the IPP isomerase type 2 family. Homooctamer. Dimer of tetramers. It depends on FMN as a cofactor. The cofactor is NADPH. Requires Mg(2+) as cofactor.

It localises to the cytoplasm. The enzyme catalyses isopentenyl diphosphate = dimethylallyl diphosphate. Functionally, involved in the biosynthesis of isoprenoids. Catalyzes the 1,3-allylic rearrangement of the homoallylic substrate isopentenyl (IPP) to its allylic isomer, dimethylallyl diphosphate (DMAPP). The protein is Isopentenyl-diphosphate delta-isomerase of Staphylococcus aureus (strain N315).